The chain runs to 75 residues: Anionic peptide (75 aa).

The signal sequence occupies residues 1 to 24 (MVSKSLIVLLLVSVLVSTFYTSEA).

The protein belongs to the non-disulfide-bridged peptide (NDBP) superfamily. In terms of tissue distribution, expressed by the venom gland.

The protein localises to the secreted. This Tityus discrepans (Venezuelan scorpion) protein is Anionic peptide.